Here is a 95-residue protein sequence, read N- to C-terminus: Aspartyl/glutamyl-tRNA(Asn/Gln) amidotransferase subunit C (95 aa).

The protein belongs to the GatC family. Heterotrimer of A, B and C subunits.

It carries out the reaction L-glutamyl-tRNA(Gln) + L-glutamine + ATP + H2O = L-glutaminyl-tRNA(Gln) + L-glutamate + ADP + phosphate + H(+). The enzyme catalyses L-aspartyl-tRNA(Asn) + L-glutamine + ATP + H2O = L-asparaginyl-tRNA(Asn) + L-glutamate + ADP + phosphate + 2 H(+). Functionally, allows the formation of correctly charged Asn-tRNA(Asn) or Gln-tRNA(Gln) through the transamidation of misacylated Asp-tRNA(Asn) or Glu-tRNA(Gln) in organisms which lack either or both of asparaginyl-tRNA or glutaminyl-tRNA synthetases. The reaction takes place in the presence of glutamine and ATP through an activated phospho-Asp-tRNA(Asn) or phospho-Glu-tRNA(Gln). In Maricaulis maris (strain MCS10) (Caulobacter maris), this protein is Aspartyl/glutamyl-tRNA(Asn/Gln) amidotransferase subunit C.